The following is a 211-amino-acid chain: Molybdenum cofactor guanylyltransferase (211 aa).

Residues 12–14, lysine 25, asparagine 53, aspartate 71, and aspartate 101 contribute to the GTP site; that span reads LAG. Aspartate 101 contacts Mg(2+).

The protein belongs to the MobA family. In terms of assembly, monomer. It depends on Mg(2+) as a cofactor.

Its subcellular location is the cytoplasm. The catalysed reaction is Mo-molybdopterin + GTP + H(+) = Mo-molybdopterin guanine dinucleotide + diphosphate. Its function is as follows. Transfers a GMP moiety from GTP to Mo-molybdopterin (Mo-MPT) cofactor (Moco or molybdenum cofactor) to form Mo-molybdopterin guanine dinucleotide (Mo-MGD) cofactor. This is Molybdenum cofactor guanylyltransferase from Acidovorax sp. (strain JS42).